A 507-amino-acid polypeptide reads, in one-letter code: ATP synthase subunit alpha (507 aa).

Residue 170–177 coordinates ATP; the sequence is GDRQTGKT.

This sequence belongs to the ATPase alpha/beta chains family. F-type ATPases have 2 components, CF(1) - the catalytic core - and CF(0) - the membrane proton channel. CF(1) has five subunits: alpha(3), beta(3), gamma(1), delta(1), epsilon(1). CF(0) has three main subunits: a(1), b(2) and c(9-12). The alpha and beta chains form an alternating ring which encloses part of the gamma chain. CF(1) is attached to CF(0) by a central stalk formed by the gamma and epsilon chains, while a peripheral stalk is formed by the delta and b chains.

The protein localises to the cell inner membrane. The catalysed reaction is ATP + H2O + 4 H(+)(in) = ADP + phosphate + 5 H(+)(out). Functionally, produces ATP from ADP in the presence of a proton gradient across the membrane. The alpha chain is a regulatory subunit. The protein is ATP synthase subunit alpha of Thermosipho africanus (strain TCF52B).